Here is a 290-residue protein sequence, read N- to C-terminus: uncharacterized protein (290 aa).

Transmembrane regions (helical) follow at residues 71–91 (FWSFSVLTTMIISCIIFVKNI), 124–144 (GILISSPFIVYQILLFVLPGM), 155–175 (IIIGSMILFLLGLIFGYYILV), 202–222 (FILVLLFGTALAFQLPVLQLV), 234–254 (MFSIWRYVILLSTVVGAVLTP), and 262–282 (ILLSSIILILYFGGASLVLVV).

This sequence belongs to the TatC family.

Its subcellular location is the plastid. The protein localises to the chloroplast membrane. This is an uncharacterized protein from Guillardia theta (Cryptophyte).